The following is a 61-amino-acid chain: Large ribosomal subunit protein uL30 (61 aa).

It belongs to the universal ribosomal protein uL30 family. As to quaternary structure, part of the 50S ribosomal subunit.

This is Large ribosomal subunit protein uL30 from Corynebacterium efficiens (strain DSM 44549 / YS-314 / AJ 12310 / JCM 11189 / NBRC 100395).